The sequence spans 245 residues: Large ribosomal subunit protein uL3 (245 aa).

N5-methylglutamine is present on glutamine 152. Residues 224 to 245 are disordered; sequence RSKAVQAEAAAPAEAAAPEGDN. Residues 230–245 are compositionally biased toward low complexity; the sequence is AEAAAPAEAAAPEGDN.

Belongs to the universal ribosomal protein uL3 family. Part of the 50S ribosomal subunit. Forms a cluster with proteins L14 and L19. Methylated by PrmB.

Functionally, one of the primary rRNA binding proteins, it binds directly near the 3'-end of the 23S rRNA, where it nucleates assembly of the 50S subunit. In Paracoccus denitrificans (strain Pd 1222), this protein is Large ribosomal subunit protein uL3.